The chain runs to 132 residues: Small ribosomal subunit protein uS8 (132 aa).

This sequence belongs to the universal ribosomal protein uS8 family. Part of the 30S ribosomal subunit. Contacts proteins S5 and S12.

In terms of biological role, one of the primary rRNA binding proteins, it binds directly to 16S rRNA central domain where it helps coordinate assembly of the platform of the 30S subunit. The chain is Small ribosomal subunit protein uS8 from Rhizobium etli (strain CIAT 652).